The primary structure comprises 147 residues: DNA-directed RNA polymerase subunit 6 homolog (147 aa).

The protein belongs to the archaeal RpoK/eukaryotic RPB6 RNA polymerase subunit family. As to quaternary structure, part of the viral DNA-directed RNA polymerase that consists of 8 polII-like subunits (RPB1, RPB2, RPB3, RPB5, RPB6, RPB7, RPB9, RPB10), a capping enzyme and a termination factor.

It is found in the host cytoplasm. Its subcellular location is the virion. In terms of biological role, component of the DNA-directed RNA polymerase (RNAP) that catalyzes the transcription in the cytoplasm of viral DNA into RNA using the four ribonucleoside triphosphates as substrates. In Ornithodoros (relapsing fever ticks), this protein is DNA-directed RNA polymerase subunit 6 homolog.